The primary structure comprises 102 residues: Small ribosomal subunit protein uS10 (102 aa).

This sequence belongs to the universal ribosomal protein uS10 family. As to quaternary structure, part of the 30S ribosomal subunit.

Functionally, involved in the binding of tRNA to the ribosomes. This chain is Small ribosomal subunit protein uS10, found in Pelobacter propionicus (strain DSM 2379 / NBRC 103807 / OttBd1).